The sequence spans 371 residues: Neuropeptide S receptor (371 aa).

Residues 1–21 (MPANFTEGSFDSSGTGQTLDS) are compositionally biased toward polar residues. The disordered stretch occupies residues 1-22 (MPANFTEGSFDSSGTGQTLDSS). Residues 1–52 (MPANFTEGSFDSSGTGQTLDSSPVACTETVTFTEVVEGKEWGSFYYSFKTEQ) lie on the Extracellular side of the membrane. N-linked (GlcNAc...) asparagine glycosylation occurs at Asn4. Residues 53-73 (LITLWVLFVFTIVGNSVVLFS) form a helical membrane-spanning segment. Residues 74–82 (TWRRKKKSR) are Cytoplasmic-facing. A helical membrane pass occupies residues 83-103 (MTFFVTQLAITDSFTGLVNIL). Residues 104-123 (TDINWRFTGDFTAPDLVCRV) are Extracellular-facing. The cysteines at positions 121 and 197 are disulfide-linked. The helical transmembrane segment at 124 to 144 (VRYLQVVLLYASTYVLVSLSI) threads the bilayer. Residues 145–164 (DRYHAIVYPMKFLQGEKQAR) are Cytoplasmic-facing. The chain crosses the membrane as a helical span at residues 165–185 (VLIVIAWSLSFLFSIPTLIIF). The Extracellular portion of the chain corresponds to 186–212 (GKRTLSNGEVQCWALWPDDSYWTPYMT). Residues 213–233 (IVAFLVYFIPLTIISIMYGIV) traverse the membrane as a helical segment. Residues 234–275 (IRTIWIKSKTYETVISNCSDGKLCSSYNRGLISKAKIKAIKY) are Cytoplasmic-facing. Residues 276–296 (SIIIILAFICCWSPYFLFDIL) traverse the membrane as a helical segment. The Extracellular portion of the chain corresponds to 297–312 (DNFNLLPDTQERFYAS). Residues 313–333 (VIIQNLPALNSAINPLIYCVF) traverse the membrane as a helical segment. Residues 334–371 (SSSISFPCREQRSQDSRMTFRERTERHEMQILSKPEFI) are Cytoplasmic-facing.

It belongs to the G-protein coupled receptor 1 family. Vasopressin/oxytocin receptor subfamily. As to expression, isoform 4 is ubiquitous; it is detected in glandular epithelia of bronchus, stomach, small intestine, colon, uterus, esophagus, spleen, kidney, pancreas, prostate and breast. Isoform 1 is detected in uterus, colon and prostate, and in the smooth muscle cell layer in bronchial and arterial walls (at protein level). Isoform 1 is predominantly expressed in smooth muscle. Isoform 4 is predominantly expressed in epithelial cells. In bronchial biopsies, it is expressed in smooth muscle cells of asthma patients, but not in control patients; whereas in epithelial cells, its expression is consistently stronger in asthma patients.

It is found in the cell membrane. Its subcellular location is the cytoplasm. Its function is as follows. G-protein coupled receptor for neuropeptide S (NPS). Promotes mobilization of intracellular Ca(2+) stores. Inhibits cell growth in response to NPS binding. Involved in pathogenesis of asthma and other IgE-mediated diseases. This is Neuropeptide S receptor (NPSR1) from Homo sapiens (Human).